Here is a 439-residue protein sequence, read N- to C-terminus: Xylose isomerase (439 aa).

Residues His-101 and Asp-104 contribute to the active site. Glu-232, Glu-268, His-271, Asp-296, Asp-307, Asp-309, and Asp-339 together coordinate Mg(2+).

It belongs to the xylose isomerase family. Homotetramer. It depends on Mg(2+) as a cofactor.

Its subcellular location is the cytoplasm. The enzyme catalyses alpha-D-xylose = alpha-D-xylulofuranose. The sequence is that of Xylose isomerase from Haemophilus influenzae (strain 86-028NP).